Consider the following 376-residue polypeptide: ATP synthase gamma chain, chloroplastic (376 aa).

The N-terminal 52 residues, 1–52 (MSCSNVTMLVSSKPSLPDASNLSFRSAFNPFQLPSQNSSSSCTPSRPTSIQC), are a transit peptide targeting the chloroplast. The active site involves C133. A disulfide bridge links C250 with C256.

It belongs to the ATPase gamma chain family. In terms of assembly, F-type ATPases have 2 components, CF(1) - the catalytic core - and CF(0) - the membrane proton channel. CF(1) has five subunits: alpha(3), beta(3), gamma(1), delta(1), epsilon(1). CF(0) has four main subunits: a, b, b' and c.

The protein resides in the plastid. It is found in the chloroplast thylakoid membrane. In terms of biological role, produces ATP from ADP in the presence of a proton gradient across the membrane. The gamma chain is believed to be important in regulating ATPase activity and the flow of protons through the CF(0) complex. The chain is ATP synthase gamma chain, chloroplastic (ATPC) from Pisum sativum (Garden pea).